Consider the following 368-residue polypeptide: Probable dual-specificity RNA methyltransferase RlmN (368 aa).

Catalysis depends on glutamate 100, which acts as the Proton acceptor. The Radical SAM core domain maps to 106-344 (QYYGLSVCVT…CVVRQEHGTD (239 aa)). An intrachain disulfide couples cysteine 113 to cysteine 349. [4Fe-4S] cluster contacts are provided by cysteine 120, cysteine 124, and cysteine 127. S-adenosyl-L-methionine contacts are provided by residues 172 to 173 (GE), serine 204, 227 to 229 (SLH), and asparagine 305. Cysteine 349 acts as the S-methylcysteine intermediate in catalysis.

This sequence belongs to the radical SAM superfamily. RlmN family. [4Fe-4S] cluster is required as a cofactor.

It is found in the cytoplasm. The enzyme catalyses adenosine(2503) in 23S rRNA + 2 reduced [2Fe-2S]-[ferredoxin] + 2 S-adenosyl-L-methionine = 2-methyladenosine(2503) in 23S rRNA + 5'-deoxyadenosine + L-methionine + 2 oxidized [2Fe-2S]-[ferredoxin] + S-adenosyl-L-homocysteine. The catalysed reaction is adenosine(37) in tRNA + 2 reduced [2Fe-2S]-[ferredoxin] + 2 S-adenosyl-L-methionine = 2-methyladenosine(37) in tRNA + 5'-deoxyadenosine + L-methionine + 2 oxidized [2Fe-2S]-[ferredoxin] + S-adenosyl-L-homocysteine. Functionally, specifically methylates position 2 of adenine 2503 in 23S rRNA and position 2 of adenine 37 in tRNAs. This Streptococcus agalactiae serotype III (strain NEM316) protein is Probable dual-specificity RNA methyltransferase RlmN.